Consider the following 217-residue polypeptide: Uracil-DNA glycosylase (217 aa).

Catalysis depends on aspartate 62, which acts as the Proton acceptor.

This sequence belongs to the uracil-DNA glycosylase (UDG) superfamily. UNG family.

Its subcellular location is the cytoplasm. It carries out the reaction Hydrolyzes single-stranded DNA or mismatched double-stranded DNA and polynucleotides, releasing free uracil.. Its function is as follows. Excises uracil residues from the DNA which can arise as a result of misincorporation of dUMP residues by DNA polymerase or due to deamination of cytosine. In Streptococcus equi subsp. zooepidemicus (strain MGCS10565), this protein is Uracil-DNA glycosylase.